Reading from the N-terminus, the 238-residue chain is Probable transcriptional regulatory protein HH_1604 (238 aa).

The protein belongs to the TACO1 family.

It is found in the cytoplasm. The chain is Probable transcriptional regulatory protein HH_1604 from Helicobacter hepaticus (strain ATCC 51449 / 3B1).